The primary structure comprises 411 residues: Serine hydroxymethyltransferase (411 aa).

Residue 120-122 (GHL) coordinates (6S)-5,6,7,8-tetrahydrofolate. Residue Lys-225 is modified to N6-(pyridoxal phosphate)lysine. A (6S)-5,6,7,8-tetrahydrofolate-binding site is contributed by 350 to 352 (SPF).

The protein belongs to the SHMT family. In terms of assembly, homodimer. The cofactor is pyridoxal 5'-phosphate.

Its subcellular location is the cytoplasm. The catalysed reaction is (6R)-5,10-methylene-5,6,7,8-tetrahydrofolate + glycine + H2O = (6S)-5,6,7,8-tetrahydrofolate + L-serine. It participates in one-carbon metabolism; tetrahydrofolate interconversion. The protein operates within amino-acid biosynthesis; glycine biosynthesis; glycine from L-serine: step 1/1. Functionally, catalyzes the reversible interconversion of serine and glycine with tetrahydrofolate (THF) serving as the one-carbon carrier. This reaction serves as the major source of one-carbon groups required for the biosynthesis of purines, thymidylate, methionine, and other important biomolecules. Also exhibits THF-independent aldolase activity toward beta-hydroxyamino acids, producing glycine and aldehydes, via a retro-aldol mechanism. In Lactobacillus acidophilus (strain ATCC 700396 / NCK56 / N2 / NCFM), this protein is Serine hydroxymethyltransferase.